A 1440-amino-acid polypeptide reads, in one-letter code: Protein lin-15B (1440 aa).

Disordered regions lie at residues 1 to 22, 48 to 67, 618 to 660, and 738 to 769; these read MQTL…SSSS, ILRH…HLDA, PKEE…GRPI, and KDEP…PSSY. A compositionally biased stretch (low complexity) spans 10 to 22; that stretch reads TSNPASIPTSSSS. Residues 631-646 show a composition bias toward low complexity; that stretch reads STSSPATSSPTIIRPR. Polar residues predominate over residues 757-767; it reads NRTTASSQGPS. The segment at 1135–1209 adopts a THAP-type zinc-finger fold; that stretch reads NPGVCCFCSK…LLKGMIPDAA (75 aa). 3 disordered regions span residues 1239–1281, 1298–1350, and 1395–1440; these read AIDL…EPSQ, RELS…GTSQ, and FADE…PSNE. Residues 1254–1264 show a composition bias toward acidic residues; it reads TQEEEEEEEYE. A DNA-binding region (a.T hook 1) is located at residues 1317 to 1329; sequence PNPRGRPRKYPKN. Residues 1396 to 1407 are compositionally biased toward acidic residues; that stretch reads ADEEEEEEEYEE. The a.T hook 2 DNA-binding region spans 1418 to 1430; that stretch reads GRPVGRPRKDANK.

Its function is as follows. Synthetic multivulva (synMuv) class B protein. SynMuv proteins are required to repress the induction of vulval development. Acts redundantly with SynMuv class A protein lin-15A to negatively regulate vulval development. Regulates let-23 basal activity. The sequence is that of Protein lin-15B from Caenorhabditis elegans.